A 259-amino-acid polypeptide reads, in one-letter code: DNA repair protein RecO (259 aa).

Belongs to the RecO family.

In terms of biological role, involved in DNA repair and RecF pathway recombination. The chain is DNA repair protein RecO from Chloroherpeton thalassium (strain ATCC 35110 / GB-78).